The following is a 180-amino-acid chain: Signal peptidase complex subunit 3 (180 aa).

Residues 1-11 (MNTVLSRANSL) lie on the Cytoplasmic side of the membrane. The helical; Signal-anchor for type II membrane protein transmembrane segment at 12-32 (FAFSLSVMAALTFGCFITTAF) threads the bilayer. At 33–180 (KERSVPVSIA…PDTYETTKSY (148 aa)) the chain is on the lumenal side. N-linked (GlcNAc...) asparagine glycosylation occurs at Asn-141.

It belongs to the SPCS3 family. Component of the signal peptidase complex paralog A (SPC-A) composed of a catalytic subunit SEC11A and three accessory subunits SPCS1, SPCS2 and SPCS3. Component of the signal peptidase complex paralog C (SPC-C) composed of a catalytic subunit SEC11C and three accessory subunits SPCS1, SPCS2 and SPCS3. The complex induces a local thinning of the ER membrane which is used to measure the length of the signal peptide (SP) h-region of protein substrates. This ensures the selectivity of the complex towards h-regions shorter than 18-20 amino acids. As to expression, expressed in hen oviduct (at protein level).

The protein resides in the endoplasmic reticulum membrane. Its function is as follows. Essential component of the signal peptidase complex (SPC) which catalyzes the cleavage of N-terminal signal sequences from nascent proteins as they are translocated into the lumen of the endoplasmic reticulum. Essential for the SPC catalytic activity, possibly by stabilizing and positioning the active center of the complex close to the lumenal surface. This chain is Signal peptidase complex subunit 3, found in Gallus gallus (Chicken).